Consider the following 130-residue polypeptide: uncharacterized protein (130 aa).

The protein belongs to the HesB/IscA family.

This is an uncharacterized protein from Buchnera aphidicola subsp. Acyrthosiphon pisum (strain APS) (Acyrthosiphon pisum symbiotic bacterium).